The primary structure comprises 550 residues: Dr1-associated corepressor homolog (550 aa).

Positions 7 to 71 (TKFPMARIKK…ISVNHLKECI (65 aa)) constitute a Histone-fold domain. A compositionally biased stretch (basic and acidic residues) spans 89 to 103 (DDKNEKRGRPKKTEG). 3 disordered regions span residues 89–355 (DDKN…GQQF), 378–444 (SLPV…SNIN), and 461–512 (FNSF…LPSF). The span at 104 to 140 (EDGGEEEEEEEEEMDMGEEEEEEEDEDDDDSDEEEEE) shows a compositional bias: acidic residues. A compositionally biased stretch (gly residues) spans 148–164 (GSRGGKGSRGGRGGARG). The segment covering 182-193 (TTITTTTATTTP) has biased composition (low complexity). The span at 200–224 (NFANSPKDIQSTSLKKPSARKSNTT) shows a compositional bias: polar residues. 3 stretches are compositionally biased toward low complexity: residues 225 to 238 (SPKS…SAGS), 245 to 350 (NNNN…NNNN), and 382 to 422 (LNNS…NNSN).

Belongs to the NC2 alpha/DRAP1 family.

It is found in the nucleus. Involved in transcriptional regulation. Component of the NC2 complex which represses RNA polymerase II transcription through binding to tbp and thereby inhibiting the assembly of the preinitiation complex. In Dictyostelium discoideum (Social amoeba), this protein is Dr1-associated corepressor homolog (drap1).